We begin with the raw amino-acid sequence, 174 residues long: Secretory-abundant heat soluble protein 68234 (174 aa).

The signal sequence occupies residues 1–19; sequence MARFLVALALFGVVAMTAA. The segment at 26–57 is SAHS-c1; sequence EWSGKPWLGKFVAEVTDKSENWEAFVDALGLP. The SAHS-c2 stretch occupies residues 72-100; that stretch reads YKQGDHYHHIFALPDKNFEKDIEFTLGQE. The tract at residues 113 to 162 is SAHS-c3; that stretch reads KYSEDGEKLVADVSIPTKGKTIRSEYEVQGDQLIKTYKTGDIVAKKWFKK.

The protein belongs to the Secretory-abundant heat soluble protein (SAHS) family.

It localises to the secreted. In terms of biological role, secreted heat soluble protein acting as a molecular shield in water-deficient condition. Tardigrade-specific intrinsically disordered proteins (TDPs) are essential for desiccation tolerance by forming non-crystalline amorphous solids upon desiccation, and this vitrified state mirrors their protective capabilities. The sequence is that of Secretory-abundant heat soluble protein 68234 from Hypsibius exemplaris (Freshwater tardigrade).